Reading from the N-terminus, the 352-residue chain is MTADSCNPCLTLENTIDVQEVPMTKSVVLADPRGFCAGVDRAILTVQTILKAAEASGKRTREDGLPPVYVRRQIVHNKHVVEDLAGQGAVFVQELAEIPDAAAQAGIPVVFSAHGVSPVVKAEAERRGMHVVDATCPLVGKVHREVLRFVREGYEIVYIGHKGHDEAVGVVGESPEHVHLIEHESDVDSLDFAPDTKLVLLSQTTLSVDETADTIAALKAKFPWIQEPPSSDICYATSNRQAAVKLVAQQSDCVVIVGSANSSNSVRLMEVAQEGLGERGKAYRVDDASELDPAWFEGLESVGISSGASVPDELVSGVIDALQNLGFTGMKSVETIKENMHFVLPAELRRKK.

A [4Fe-4S] cluster-binding site is contributed by Cys-36. Residues His-76 and His-114 each coordinate (2E)-4-hydroxy-3-methylbut-2-enyl diphosphate. The dimethylallyl diphosphate site is built by His-76 and His-114. His-76 and His-114 together coordinate isopentenyl diphosphate. Cys-136 provides a ligand contact to [4Fe-4S] cluster. A (2E)-4-hydroxy-3-methylbut-2-enyl diphosphate-binding site is contributed by His-164. Position 164 (His-164) interacts with dimethylallyl diphosphate. His-164 is an isopentenyl diphosphate binding site. The active-site Proton donor is Glu-166. Thr-204 is a (2E)-4-hydroxy-3-methylbut-2-enyl diphosphate binding site. Cys-234 serves as a coordination point for [4Fe-4S] cluster. (2E)-4-hydroxy-3-methylbut-2-enyl diphosphate contacts are provided by Ser-262, Ser-263, Asn-264, and Ser-309. 4 residues coordinate dimethylallyl diphosphate: Ser-262, Ser-263, Asn-264, and Ser-309. Isopentenyl diphosphate contacts are provided by Ser-262, Ser-263, Asn-264, and Ser-309.

Belongs to the IspH family. The cofactor is [4Fe-4S] cluster.

The enzyme catalyses isopentenyl diphosphate + 2 oxidized [2Fe-2S]-[ferredoxin] + H2O = (2E)-4-hydroxy-3-methylbut-2-enyl diphosphate + 2 reduced [2Fe-2S]-[ferredoxin] + 2 H(+). The catalysed reaction is dimethylallyl diphosphate + 2 oxidized [2Fe-2S]-[ferredoxin] + H2O = (2E)-4-hydroxy-3-methylbut-2-enyl diphosphate + 2 reduced [2Fe-2S]-[ferredoxin] + 2 H(+). It functions in the pathway isoprenoid biosynthesis; dimethylallyl diphosphate biosynthesis; dimethylallyl diphosphate from (2E)-4-hydroxy-3-methylbutenyl diphosphate: step 1/1. It participates in isoprenoid biosynthesis; isopentenyl diphosphate biosynthesis via DXP pathway; isopentenyl diphosphate from 1-deoxy-D-xylulose 5-phosphate: step 6/6. In terms of biological role, catalyzes the conversion of 1-hydroxy-2-methyl-2-(E)-butenyl 4-diphosphate (HMBPP) into a mixture of isopentenyl diphosphate (IPP) and dimethylallyl diphosphate (DMAPP). Acts in the terminal step of the DOXP/MEP pathway for isoprenoid precursor biosynthesis. This is 4-hydroxy-3-methylbut-2-enyl diphosphate reductase from Bifidobacterium longum (strain NCC 2705).